We begin with the raw amino-acid sequence, 316 residues long: Acetyl-coenzyme A carboxylase carboxyl transferase subunit beta (316 aa).

In terms of domain architecture, CoA carboxyltransferase N-terminal spans 29 to 298 (LWTKCPNCGV…LLSPLNSHHH (270 aa)). Zn(2+)-binding residues include cysteine 33, cysteine 36, cysteine 52, and cysteine 55. The C4-type zinc-finger motif lies at 33-55 (CPNCGVLAYTKDLLANQLVCLDC).

It belongs to the AccD/PCCB family. In terms of assembly, acetyl-CoA carboxylase is a heterohexamer composed of biotin carboxyl carrier protein (AccB), biotin carboxylase (AccC) and two subunits each of ACCase subunit alpha (AccA) and ACCase subunit beta (AccD). The cofactor is Zn(2+).

It is found in the cytoplasm. It carries out the reaction N(6)-carboxybiotinyl-L-lysyl-[protein] + acetyl-CoA = N(6)-biotinyl-L-lysyl-[protein] + malonyl-CoA. It participates in lipid metabolism; malonyl-CoA biosynthesis; malonyl-CoA from acetyl-CoA: step 1/1. In terms of biological role, component of the acetyl coenzyme A carboxylase (ACC) complex. Biotin carboxylase (BC) catalyzes the carboxylation of biotin on its carrier protein (BCCP) and then the CO(2) group is transferred by the transcarboxylase to acetyl-CoA to form malonyl-CoA. This chain is Acetyl-coenzyme A carboxylase carboxyl transferase subunit beta, found in Microcystis aeruginosa (strain NIES-843 / IAM M-2473).